The sequence spans 109 residues: Nucleoid-associated protein Sputw3181_1707 (109 aa).

This sequence belongs to the YbaB/EbfC family. As to quaternary structure, homodimer.

It is found in the cytoplasm. The protein localises to the nucleoid. Its function is as follows. Binds to DNA and alters its conformation. May be involved in regulation of gene expression, nucleoid organization and DNA protection. This Shewanella sp. (strain W3-18-1) protein is Nucleoid-associated protein Sputw3181_1707.